Here is a 201-residue protein sequence, read N- to C-terminus: Glutathione S-transferase (201 aa).

The 81-residue stretch at 1–81 (MKLYYKVGAC…YIGDHSDVAA (81 aa)) folds into the GST N-terminal domain. Glutathione is bound by residues Cys10, Lys35, Val52, 65-66 (QN), and 102-105 (SDLH). One can recognise a GST C-terminal domain in the interval 87–201 (GSIERARLQE…QKAFKEEGLN (115 aa)).

This sequence belongs to the GST superfamily. Beta family. Homodimer.

Its subcellular location is the cytoplasm. The catalysed reaction is RX + glutathione = an S-substituted glutathione + a halide anion + H(+). Conjugation of reduced glutathione to a wide number of exogenous and endogenous hydrophobic electrophiles. The chain is Glutathione S-transferase (gst) from Brucella anthropi (Ochrobactrum anthropi).